We begin with the raw amino-acid sequence, 640 residues long: tRNA-dihydrouridine(47) synthase [NAD(P)(+)]-like (640 aa).

The span at 1–11 shows a compositional bias: polar residues; sequence MAESEGSNTEN. 2 disordered regions span residues 1–23 and 43–123; these read MAES…ENLD and FIDA…HSQF. The segment covering 43–57 has biased composition (basic and acidic residues); it reads FIDADGKDVTEKETC. Residues 58 to 72 are compositionally biased toward polar residues; that stretch reads SELSLNDAENTTRTE. Residues 77 to 86 are compositionally biased toward basic and acidic residues; the sequence is PEAKRIKLDD. Basic residues predominate over residues 104 to 120; it reads EKKRARGQNKSRPHMKH. C3H1-type zinc fingers lie at residues 123 to 153 and 161 to 191; these read FEEN…HDVA and EDIR…HLGE. FMN contacts are provided by residues 301–303 and Gln355; that span reads PLT. The active-site Proton donor is Cys386. FMN is bound by residues Lys425, His455, 487–489, and 510–511; these read NGD and AR.

This sequence belongs to the Dus family. Dus3 subfamily. The cofactor is FMN.

It carries out the reaction 5,6-dihydrouridine(47) in tRNA + NAD(+) = uridine(47) in tRNA + NADH + H(+). The enzyme catalyses 5,6-dihydrouridine(47) in tRNA + NADP(+) = uridine(47) in tRNA + NADPH + H(+). The catalysed reaction is a 5,6-dihydrouridine in mRNA + NAD(+) = a uridine in mRNA + NADH + H(+). It catalyses the reaction a 5,6-dihydrouridine in mRNA + NADP(+) = a uridine in mRNA + NADPH + H(+). Its function is as follows. Catalyzes the synthesis of dihydrouridine, a modified base, in various RNAs, such as tRNAs, mRNAs and some long non-coding RNAs (lncRNAs). Mainly modifies the uridine in position 47 (U47) in the D-loop of most cytoplasmic tRNAs. Also able to mediate the formation of dihydrouridine in some mRNAs, thereby regulating their translation. The protein is tRNA-dihydrouridine(47) synthase [NAD(P)(+)]-like (dus3l) of Xenopus laevis (African clawed frog).